Here is a 287-residue protein sequence, read N- to C-terminus: Undecaprenyl-diphosphatase (287 aa).

7 helical membrane-spanning segments follow: residues Pro-50–Phe-70, Leu-97–Phe-117, Ile-131–Val-151, Val-160–Gly-180, Phe-206–Ala-226, Leu-234–Leu-254, and Trp-264–Tyr-284.

Belongs to the UppP family.

Its subcellular location is the cell inner membrane. The enzyme catalyses di-trans,octa-cis-undecaprenyl diphosphate + H2O = di-trans,octa-cis-undecaprenyl phosphate + phosphate + H(+). Functionally, catalyzes the dephosphorylation of undecaprenyl diphosphate (UPP). Confers resistance to bacitracin. The protein is Undecaprenyl-diphosphatase of Synechococcus sp. (strain CC9605).